An 802-amino-acid chain; its full sequence is Neuronal PAS domain-containing protein 4 (802 aa).

The basic motif; degenerate stretch occupies residues 1-13; sequence MYRSTKGASKARR. The 53-residue stretch at 1–53 folds into the bHLH domain; the sequence is MYRSTKGASKARRDQINAEIRNLKELLPLAEADKVRLSYLHIMSLACIYTRKG. The stretch at 5–38 forms a coiled coil; sequence TKGASKARRDQINAEIRNLKELLPLAEADKVRLS. The tract at residues 14–53 is helix-loop-helix motif; that stretch reads DQINAEIRNLKELLPLAEADKVRLSYLHIMSLACIYTRKG. PAS domains lie at 70–144 and 203–275; these read SAQE…LDAD and PGPG…LAEN. The PAC domain occupies 280-319; the sequence is AEMVVRLQAKHGGWTWIYCMLYSDGPEGPITANNYPISDT. Composition is skewed to polar residues over residues 472–495, 502–518, and 527–555; these read PSSA…SSAR, TPCT…STAT, and THEQ…QLSP. Positions 472 to 555 are disordered; that stretch reads PSSATFPDPL…SQTFPEQLSP (84 aa). Residues 624–648 adopt a coiled-coil conformation; it reads YTEKEQNEIDRLIQQISQLAQGMDR.

Efficient DNA binding requires dimerization with another bHLH protein. Heterodimer; forms a heterodimer with ARNT, ARNT2 or BMAL1. In terms of processing, ubiquitinated, leading to degradation by the proteosome. In terms of tissue distribution, specifically expressed in neurons. Expressed in the lateral nucleus of the amygdala (at protein level).

Its subcellular location is the nucleus. Transcription factor expressed in neurons of the brain that regulates the excitatory-inhibitory balance within neural circuits and is required for contextual memory in the hippocampus. Plays a key role in the structural and functional plasticity of neurons. Acts as an early-response transcription factor in both excitatory and inhibitory neurons, where it induces distinct but overlapping sets of late-response genes in these two types of neurons, allowing the synapses that form on inhibitory and excitatory neurons to be modified by neuronal activity in a manner specific to their function within a circuit, thereby facilitating appropriate circuit responses to sensory experience. In excitatory neurons, activates transcription of BDNF, which in turn controls the number of GABA-releasing synapses that form on excitatory neurons, thereby promoting an increased number of inhibitory synapses on excitatory neurons. In inhibitory neurons, regulates a distinct set of target genes that serve to increase excitatory input onto somatostatin neurons, probably resulting in enhanced feedback inhibition within cortical circuits. The excitatory and inhibitory balance in neurons affects a number of processes, such as short-term and long-term memory, acquisition of experience, fear memory, response to stress and social behavior. Acts as a regulator of dendritic spine development in olfactory bulb granule cells in a sensory-experience-dependent manner by regulating expression of MDM2. Efficient DNA binding requires dimerization with another bHLH protein, such as ARNT, ARNT2 or BMAL1. Can activate the CME (CNS midline enhancer) element. This is Neuronal PAS domain-containing protein 4 from Rattus norvegicus (Rat).